A 173-amino-acid polypeptide reads, in one-letter code: Putative C-type lectin protein FPV198 (173 aa).

The C-type lectin domain maps to 50 to 169 (GMSGWVQINN…CNKKHTGICF (120 aa)).

This chain is Putative C-type lectin protein FPV198, found in Vertebrata (FPV).